A 338-amino-acid polypeptide reads, in one-letter code: Glycerol-3-phosphate dehydrogenase [NAD(P)+] (338 aa).

3 residues coordinate NADPH: Trp-12, His-33, and Lys-110. The sn-glycerol 3-phosphate site is built by Lys-110, Gly-142, and Ser-144. Ala-146 is an NADPH binding site. Sn-glycerol 3-phosphate-binding residues include Lys-197, Asp-250, Ser-260, Arg-261, and Asn-262. The active-site Proton acceptor is the Lys-197. Arg-261 serves as a coordination point for NADPH. The NADPH site is built by Val-286 and Glu-288.

It belongs to the NAD-dependent glycerol-3-phosphate dehydrogenase family.

It is found in the cytoplasm. It carries out the reaction sn-glycerol 3-phosphate + NAD(+) = dihydroxyacetone phosphate + NADH + H(+). The catalysed reaction is sn-glycerol 3-phosphate + NADP(+) = dihydroxyacetone phosphate + NADPH + H(+). Its pathway is membrane lipid metabolism; glycerophospholipid metabolism. Its function is as follows. Catalyzes the reduction of the glycolytic intermediate dihydroxyacetone phosphate (DHAP) to sn-glycerol 3-phosphate (G3P), the key precursor for phospholipid synthesis. The chain is Glycerol-3-phosphate dehydrogenase [NAD(P)+] from Acidobacterium capsulatum (strain ATCC 51196 / DSM 11244 / BCRC 80197 / JCM 7670 / NBRC 15755 / NCIMB 13165 / 161).